Here is a 354-residue protein sequence, read N- to C-terminus: Serine/threonine-protein kinase ppk34 (354 aa).

The 292-residue stretch at 40 to 331 (YRLKNMLGYG…IEELLRDPFL (292 aa)) folds into the Protein kinase domain. ATP is bound by residues 46–54 (LGYGACSTV) and lysine 69. Aspartate 200 (proton acceptor) is an active-site residue.

This sequence belongs to the protein kinase superfamily. Ser/Thr protein kinase family.

It is found in the cytoplasm. It localises to the nucleus. The catalysed reaction is L-seryl-[protein] + ATP = O-phospho-L-seryl-[protein] + ADP + H(+). The enzyme catalyses L-threonyl-[protein] + ATP = O-phospho-L-threonyl-[protein] + ADP + H(+). The sequence is that of Serine/threonine-protein kinase ppk34 (ppk34) from Schizosaccharomyces pombe (strain 972 / ATCC 24843) (Fission yeast).